The sequence spans 417 residues: Methyltransferase/ribosomally synthesized cyclic peptide lentinulin A precursor ledMA (417 aa).

Residues M1–K251 are methyltransferase domain. Catalysis depends on residues R72, Y76, and Y98. S-adenosyl-L-methionine contacts are provided by Y98, H100, V103, A130, Q172, A213, S244, and T245. Residues E252–M378 form a clasp domain region. The tract at residues P379–P399 is precursor leader. N-methylisoleucine is present on I401. Residues V403 and V404 each carry the N-methylvaline modification. G405 is modified (N-methylglycine). N-methylvaline occurs at positions 406 and 407. At G408 the chain carries N-methylglycine. An N-methylvaline modification is found at V410. G411 is modified (N-methylglycine). N-methylvaline is present on V413.

It in the N-terminal section; belongs to the precorrin methyltransferase family. As to quaternary structure, homodimer. LedMA automethylates at Ile-401, Val-403, Val-404, Gly-405, Val-406, Val-407, Gly-408, Val-410, Gly-411 and Val-413 before being processed by the prolyloligopeptidase ledP which likely forms a peptidyl ester upon removal of the follower propeptide, which then undergoes macrocyclization with the N-terminus of the modified core peptide. Peptide backbone alpha-N-methylations change the physicochemical properties of amide bonds to provide structural constraints and other favorable characteristics including biological membrane permeability to peptides.

It participates in mycotoxin biosynthesis. In terms of biological role, fusion protein of the methyltransferase ledM and the lentinulin A core peptide; part of the gene cluster that mediates the biosynthesis of lentinulin A, a highly methylated cyclic dodecapeptide with nematodicidal activity. Lentinulin A derives from the C-terminus of the ledMA protein, and it is the ledMA protein that methylates its own C-terminus using S-adenosyl methionine (SAM). The C-terminus is subsequently cleaved off and macrocyclized by the prolyloligopeptidase ledP to give the final product. In Lentinula edodes (Shiitake mushroom), this protein is Methyltransferase/ribosomally synthesized cyclic peptide lentinulin A precursor ledMA.